We begin with the raw amino-acid sequence, 2214 residues long: MATRSSRRESRLPFLFTLVALLPPGALCEVWTQRLHGGSAPLPQDRGFLVVQGDPRELRLWARGDARGASRADEKPLRRKRSAALQPEPIKVYGQVSLNDSHNQMVVHWAGEKSNVIVALARDSLALARPKSSDVYVSYDYGKSFKKISDKLNFGLGNRSEAVIAQFYHSPADNKRYIFADAYAQYLWITFDFCNTLQGFSIPFRAADLLLHSKASNLLLGFDRSHPNKQLWKSDDFGQTWIMIQEHVKSFSWGIDPYDKPNTIYIERHEPSGYSTVFRSTDFFQSRENQEVILEEVRDFQLRDKYMFATKVVHLLGSEQQSSVQLWVSFGRKPMRAAQFVTRHPINEYYIADASEDQVFVCVSHSNNRTNLYISEAEGLKFSLSLENVLYYSPGGAGSDTLVRYFANEPFADFHRVEGLQGVYIATLINGSMNEENMRSVITFDKGGTWEFLQAPAFTGYGEKINCELSQGCSLHLAQRLSQLLNLQLRRMPILSKESAPGLIIATGSVGKNLASKTNVYISSSAGARWREALPGPHYYTWGDHGGIITAIAQGMETNELKYSTNEGETWKTFIFSEKPVFVYGLLTEPGEKSTVFTIFGSNKENVHSWLILQVNATDALGVPCTENDYKLWSPSDERGNECLLGHKTVFKRRTPHATCFNGEDFDRPVVVSNCSCTREDYECDFGFKMSEDLSLEVCVPDPEFSGKSYSPPVPCPVGSTYRRTRGYRKISGDTCSGGDVEARLEGELVPCPLAEENEFILYAVRKSIYRYDLASGATEQLPLTGLRAAVALDFDYEHNCLYWSDLALDVIQRLCLNGSTGQEVIINSGLETVEALAFEPLSQLLYWVDAGFKKIEVANPDGDFRLTIVNSSVLDRPRALVLVPQEGVMFWTDWGDLKPGIYRSNMDGSAAYHLVSEDVKWPNGISVDDQWIYWTDAYLECIERITFSGQQRSVILDNLPHPYAIAVFKNEIYWDDWSQLSIFRASKYSGSQMEILANQLTGLMDMKIFYKGKNTGSNACVPRPCSLLCLPKANNSRSCRCPEDVSSSVLPSGDLMCDCPQGYQLKNNTCVKQENTCLRNQYRCSNGNCINSIWWCDFDNDCGDMSDERNCPTTICDLDTQFRCQESGTCIPLSYKCDLEDDCGDNSDESHCEMHQCRSDEYNCSSGMCIRSSWVCDGDNDCRDWSDEANCTAIYHTCEASNFQCRNGHCIPQRWACDGDTDCQDGSDEDPVNCEKKCNGFRCPNGTCIPSSKHCDGLRDCSDGSDEQHCEPLCTHFMDFVCKNRQQCLFHSMVCDGIIQCRDGSDEDAAFAGCSQDPEFHKVCDEFGFQCQNGVCISLIWKCDGMDDCGDYSDEANCENPTEAPNCSRYFQFRCENGHCIPNRWKCDRENDCGDWSDEKDCGDSHILPFSTPGPSTCLPNYYRCSSGTCVMDTWVCDGYRDCADGSDEEACPLLANVTAASTPTQLGRCDRFEFECHQPKTCIPNWKRCDGHQDCQDGRDEANCPTHSTLTCMSREFQCEDGEACIVLSERCDGFLDCSDESDEKACSDELTVYKVQNLQWTADFSGDVTLTWMRPKKMPSASCVYNVYYRVVGESIWKTLETHSNKTNTVLKVLKPDTTYQVKVQVQCLSKAHNTNDFVTLRTPEGLPDAPRNLQLSLPREAEGVIVGHWAPPIHTHGLIREYIVEYSRSGSKMWASQRAASNFTEIKNLLVNTLYTVRVAAVTSRGIGNWSDSKSITTIKGKVIPPPDIHIDSYGENYLSFTLTMESDIKVNGYVVNLFWAFDTHKQERRTLNFRGSILSHKVGNLTAHTSYEISAWAKTDLGDSPLAFEHVMTRGVRPPAPSLKAKAINQTAVECTWTGPRNVVYGIFYATSFLDLYRNPKSLTTSLHNKTVIVSKDEQYLFLVRVVVPYQGPSSDYVVVKMIPDSRLPPRHLHVVHTGKTSVVIKWESPYDSPDQDLLYAVAVKDLIRKTDRSYKVKSRNSTVEYTLNKLEPGGKYHIIVQLGNMSKDSSIKITTVSLSAPDALKIITENDHVLLFWKSLALKEKHFNESRGYEIHMFDSAMNITAYLGNTTDNFFKISNLKMGHNYTFTVQARCLFGNQICGEPAILLYDELGSGADASATQAARSTDVAAVVVPILFLILLSLGVGFAILYTKHRRLQSSFTAFANSHYSSRLGSAIFSSGDDLGEDDEDAPMITGFSDDVPMVIA.

The first 28 residues, 1–28 (MATRSSRRESRLPFLFTLVALLPPGALC), serve as a signal peptide directing secretion. The propeptide at 29 to 81 (EVWTQRLHGGSAPLPQDRGFLVVQGDPRELRLWARGDARGASRADEKPLRRKR) is removed in mature form. The short motif at 63 to 65 (RGD) is the Cell attachment site element. Over 82–2137 (SAALQPEPIK…TQAARSTDVA (2056 aa)) the chain is Lumenal. The N-linked (GlcNAc...) asparagine glycan is linked to N99. Phosphoserine is present on S114. The BNR 1 repeat unit spans residues 136-147 (YVSYDYGKSFKK). N-linked (GlcNAc...) asparagine glycosylation occurs at N158. A BNR 2 repeat occupies 232-243 (WKSDDFGQTWIM). N368 and N430 each carry an N-linked (GlcNAc...) asparagine glycan. 3 BNR repeats span residues 441–452 (VITFDKGGTWEF), 521–532 (YISSSAGARWRE), and 562–573 (KYSTNEGETWKT). Residues N616, N674, N818, and N871 are each glycosylated (N-linked (GlcNAc...) asparagine). 5 LDL-receptor class B repeats span residues 800-843 (NCLY…EPLS), 844-887 (QLLY…VPQE), 888-932 (GVMF…DDQW), 933-970 (IYWTDAYLECIERITFSGQQRSVILDNLPHPYAIAVFK), and 971-1013 (NEIY…FYKG). The 47-residue stretch at 1026–1072 (CSLLCLPKANNSRSCRCPEDVSSSVLPSGDLMCDCPQGYQLKNNTCV) folds into the EGF-like domain. Residues N1035 and N1068 are each glycosylated (N-linked (GlcNAc...) asparagine). 9 consecutive LDL-receptor class A domains span residues 1076 to 1114 (NTCLRNQYRCSNGNCINSIWWCDFDNDCGDMSDERNCPT), 1115 to 1155 (TICD…HCEM), 1156 to 1194 (HQCRSDEYNCSSGMCIRSSWVCDGDNDCRDWSDEANCTA), 1198 to 1236 (TCEASNFQCRNGHCIPQRWACDGDTDCQDGSDEDPVNCE), 1238 to 1272 (KCNGFRCPNGTCIPSSKHCDGLRDCSDGSDEQHCE), 1273 to 1317 (PLCT…GCSQ), 1323 to 1361 (KVCDEFGFQCQNGVCISLIWKCDGMDDCGDYSDEANCEN), 1366 to 1405 (PNCSRYFQFRCENGHCIPNRWKCDRENDCGDWSDEKDCGD), and 1417 to 1455 (STCLPNYYRCSSGTCVMDTWVCDGYRDCADGSDEEACPL). Intrachain disulfides connect C1078/C1090, C1085/C1103, C1097/C1112, C1117/C1131, C1125/C1144, C1138/C1153, C1158/C1170, C1165/C1183, C1177/C1192, C1199/C1211, C1206/C1224, C1218/C1235, C1239/C1249, C1244/C1262, C1256/C1271, C1275/C1289, C1283/C1302, C1296/C1315, C1325/C1337, C1332/C1350, and C1344/C1359. An N-linked (GlcNAc...) asparagine glycan is attached at N1164. N-linked (GlcNAc...) asparagine glycosylation is present at N1191. N1246 carries an N-linked (GlcNAc...) asparagine glycan. A glycan (N-linked (GlcNAc...) asparagine) is linked at N1367. 6 disulfide bridges follow: C1368/C1381, C1376/C1394, C1388/C1403, C1419/C1431, C1426/C1444, and C1438/C1453. N-linked (GlcNAc...) asparagine glycosylation occurs at N1458. LDL-receptor class A domains lie at 1469-1508 (GRCDRFEFECHQPKTCIPNWKRCDGHQDCQDGRDEANCPT) and 1512-1551 (LTCMSREFQCEDGEACIVLSERCDGFLDCSDESDEKACSD). Disulfide bonds link C1471/C1484, C1478/C1497, C1491/C1506, C1514/C1527, C1521/C1540, and C1534/C1549. Fibronectin type-III domains follow at residues 1557–1649 (KVQN…TPEG), 1653–1745 (APRN…TIKG), 1749–1844 (PPPD…VRPP), 1843–1927 (PPAP…VVKM), 1934–2029 (PPRH…APDA), and 2030–2118 (LKII…LYDE). N-linked (GlcNAc...) asparagine glycans are attached at residues N1608, N1706, N1733, N1809, N1854, N1894, N1986, N2010, N2054, N2069, N2076, and N2092. A helical membrane pass occupies residues 2138 to 2158 (AVVVPILFLILLSLGVGFAIL). Residues 2159–2214 (YTKHRRLQSSFTAFANSHYSSRLGSAIFSSGDDLGEDDEDAPMITGFSDDVPMVIA) are Cytoplasmic-facing. The Potential nuclear localization signal for the C-terminal fragment generated by PSEN1 signature appears at 2161–2164 (KHRR). Positions 2172-2177 (FANSHY) match the Endocytosis signal motif. Positions 2190–2214 (DDLGEDDEDAPMITGFSDDVPMVIA) are required for efficient Golgi apparatus - endosome sorting. The interval 2201–2214 (MITGFSDDVPMVIA) is required for interaction with GGA1 and GGA2. Residue S2206 is modified to Phosphoserine; by ROCK2. Positions 2208–2212 (DVPMV) match the DXXLL motif involved in the interaction with GGA1 motif.

This sequence belongs to the VPS10-related sortilin family. SORL1 subfamily. In terms of assembly, after maturation cleavage, interacts (via N-terminus) with its own propeptide; this interaction prevents interaction with other ligands, including CRLF1, GDNF, GFRA1, IL6 and IL6R. Interacts (via N-terminal ectodomain) with APP, forming a 1:1 stoichiometric complex, including with isoforms APP695, APP751 and APP770; this interaction retains APP in the trans-Golgi network and reduces processing into soluble APP-alpha and amyloid-beta peptides. Also interacts with APP C-terminal fragment C99 and with Abeta40. Interacts with beta-secretase BACE1/BACE; this interaction may affect BACE1-binding to APP and hence reduce BACE1-dependent APP cleavage. Interacts with LRPAP1/RAP. Interacts (via C-terminal cytosolic domain) with GGA1 and GGA2 (via N-terminal VHS domain). Interacts with PACS1. May interact (via the N-terminal ectodomain) with the morphogenetic neuropeptide, also called head activator or HA; this interaction is impaired in the presence of propeptide. Interacts with neurotensin/NTS. Interacts (via the N-terminal ectodomain) with PDGFB homodimer. Interacts (via N-terminal ectodomain) with the uPA receptor PLAUR; this interaction decreases PLAUR internalization. Interacts (via N-terminal ectodomain) with uPA/PLAU and PAI1/SERPINE1, either individually or in complex with each other, leading to endocytosis; this interaction is abolished in the presence of LRPAP1. Also interacts with the ternary complex composed of PLAUR-PLAU-PAI1. Also interacts with tPA/PLAT either alone or in complex with SERPINE1. Interacts (via C-terminus) with AP-1 and AP-2 complexes. Interacts with BMPR1A and BMPR1B. Interacts with lipoprotein lipase LPL; this interaction is optimal in slightly acidic conditions. Interacts (via N-terminal ectodomain) with GDNF (via propeptide) and GDNF receptor alpha-1/GFRA1, either individually or in complex with each other. The interaction with GDNF occurs mostly intracellularly. Also interacts with other GDNF receptor alpha family members, including GFRA2, GFRA3 and GFRA4. Interacts with the insulin receptor INSR; this interaction strongly increases the surface exposure of INSR. Interacts (via cytosolic C-terminus) with STK39/SPAK. Interacts (via N-terminal ectodomain) with the heterodimeric complex CRLF1-CLC; within this complex, the interaction is mediated predominantly by the CRLF1 moiety. Interacts with CNTFR, as well as with the tripartite signaling complex formed by CRLF1, CLC and CNTFR. Interacts (via N-terminal ectodomain) with IL6; this interaction leads to IL6 internalization and lysosomal degradation. Binding of SOLRL1 secreted N-terminal ectodomain to IL6 may increase IL6 trans signaling. Interacts with secreted IL6R; this interaction leads to IL6R internalization. Also interacts with transmembrane IL6R; this interaction does not affect IL6R subcellular location. Interacts with APOE. Interacts with apolipoprotein E-rich beta-VLDL. Interacts with APOA5; this interaction leads to APOA5 internalization and is abolished by heparin. Interaction with APOA5 results in enhanced binding to chylomicrons. Interacts with ROCK2. Interacts (via cytosolic C-terminus) with PPP3CB/calcineurin A beta. Interacts with NTRK2/TRKB; this interaction facilitates NTRK2 trafficking between synaptic plasma membranes, postsynaptic densities and cell soma, hence positively regulates BDNF signaling. Interacts (via cytosolic C-terminus) with HSPA12A in an ADP-dependent manner; this interaction affects SORL1 internalization and subcellular localization. Interacts (via N-terminal ectodomain) with ERBB2/HER2. Within the Golgi apparatus, the propeptide may be cleaved off by FURIN or a furin-like protease. After cleavage, the propeptide interacts with the mature protein N-terminus, preventing the association with other ligands. At the cell surface, partially subjected to proteolytic shedding that releases the ectodomain in the extracellular milieu. The shedding may be catalyzed by ADAM17/TACE. Following shedding, PSEN1/presenilin-1 cleaves the remaining transmembrane fragment and catalyzes the release of a C-terminal fragment in the cytosol and of a soluble N-terminal beta fragment in the extracellular milieu. The C-terminal cytosolic fragment localizes to the nucleus. In terms of processing, phosphorylation at Ser-2206 facilitates the interaction with GGA1. In terms of tissue distribution, highly expressed in brain (at protein level). Most abundant in the cerebellum, cerebral cortex and occipital pole; low levels in the putamen and thalamus. Expression is significantly reduced in the frontal cortex of patients suffering from Alzheimer disease. Also expressed in spinal cord, spleen, testis, prostate, ovary, thyroid and lymph nodes.

Its subcellular location is the golgi apparatus membrane. It is found in the golgi apparatus. The protein resides in the trans-Golgi network membrane. It localises to the endosome membrane. The protein localises to the early endosome membrane. Its subcellular location is the recycling endosome membrane. It is found in the endoplasmic reticulum membrane. The protein resides in the endosome. It localises to the multivesicular body membrane. The protein localises to the cell membrane. Its subcellular location is the cytoplasmic vesicle. It is found in the secretory vesicle membrane. The protein resides in the secreted. In terms of biological role, sorting receptor that directs several proteins to their correct location within the cell. Along with AP-1 complex, involved Golgi apparatus - endosome sorting. Sorting receptor for APP, regulating its intracellular trafficking and processing into amyloidogenic-beta peptides. Retains APP in the trans-Golgi network, hence preventing its transit through late endosomes where amyloid beta peptides Abeta40 and Abeta42 are generated. May also sort newly produced amyloid-beta peptides to lysosomes for catabolism. Does not affect APP trafficking from the endoplasmic reticulum to Golgi compartments. Sorting receptor for the BDNF receptor NTRK2/TRKB that facilitates NTRK2 trafficking between synaptic plasma membranes, postsynaptic densities and cell soma, hence positively regulates BDNF signaling by controlling the intracellular location of its receptor. Sorting receptor for GDNF that promotes GDNF regulated, but not constitutive secretion. Sorting receptor for the GDNF-GFRA1 complex, directing it from the cell surface to endosomes. GDNF is then targeted to lysosomes and degraded, while its receptor GFRA1 recycles back to the cell membrane, resulting in a GDNF clearance pathway. The SORL1-GFRA1 complex further targets RET for endocytosis, but not for degradation, affecting GDNF-induced neurotrophic activities. Sorting receptor for ERBB2/HER2. Regulates ERBB2 subcellular distribution by promoting its recycling after internalization from endosomes back to the plasma membrane, hence stimulating phosphoinositide 3-kinase (PI3K)-dependent ERBB2 signaling. In ERBB2-dependent cancer cells, promotes cell proliferation. Sorting receptor for lipoprotein lipase LPL. Promotes LPL localization to endosomes and later to the lysosomes, leading to degradation of newly synthesized LPL. Potential sorting receptor for APOA5, inducing APOA5 internalization to early endosomes, then to late endosomes, wherefrom a portion is sent to lysosomes and degradation, another portion is sorted to the trans-Golgi network. Sorting receptor for the insulin receptor INSR. Promotes recycling of internalized INSR via the Golgi apparatus back to the cell surface, thereby preventing lysosomal INSR catabolism, increasing INSR cell surface expression and strengthening insulin signal reception in adipose tissue. Does not affect INSR internalization. Plays a role in renal ion homeostasis, controlling the phospho-regulation of SLC12A1/NKCC2 by STK39/SPAK kinase and PPP3CB/calcineurin A beta phosphatase, possibly through intracellular sorting of STK39 and PPP3CB. Stimulates, via the N-terminal ectodomain, the proliferation and migration of smooth muscle cells, possibly by increasing cell surface expression of the urokinase receptor uPAR/PLAUR. This may promote extracellular matrix proteolysis and hence facilitate cell migration. By acting on the migration of intimal smooth muscle cells, may accelerate intimal thickening following vascular injury. Promotes adhesion of monocytes. Stimulates proliferation and migration of monocytes/macrophages. Through its action on intimal smooth muscle cells and macrophages, may accelerate intimal thickening and macrophage foam cell formation in the process of atherosclerosis. Regulates hypoxia-enhanced adhesion of hematopoietic stem and progenitor cells to the bone marrow stromal cells via a PLAUR-mediated pathway. This function is mediated by the N-terminal ectodomain. Metabolic regulator, which functions to maintain the adequate balance between lipid storage and oxidation in response to changing environmental conditions, such as temperature and diet. The N-terminal ectodomain negatively regulates adipose tissue energy expenditure, acting through the inhibition the BMP/Smad pathway. May regulate signaling by the heterodimeric neurotrophic cytokine CLCF1-CRLF1 bound to the CNTFR receptor by promoting the endocytosis of the tripartite complex CLCF1-CRLF1-CNTFR and lysosomal degradation. May regulate IL6 signaling, decreasing cis signaling, possibly by interfering with IL6-binding to membrane-bound IL6R, while up-regulating trans signaling via soluble IL6R. This chain is Sortilin-related receptor (SORL1), found in Homo sapiens (Human).